The primary structure comprises 216 residues: U1 small nuclear ribonucleoprotein A (216 aa).

2 consecutive RRM domains span residues 7 to 86 (QTIY…YSKS) and 142 to 216 (QILF…FAKK). Residues 97-142 (TFKERPKKVKPPKPAPGTDEKKDKKKKPSSAENSNPNAQTEQPPNQ) are disordered. Residues 126–142 (SAENSNPNAQTEQPPNQ) show a composition bias toward polar residues.

It belongs to the RRM U1 A/B'' family. Belongs to the spliceosome where it is associated with snRNP U1. Interacts with the SMN complex.

It is found in the nucleus. Binds stem loop II of U1 snRNA. It is the first snRNP to interact with pre-mRNA. This interaction is required for the subsequent binding of U2 snRNP and the U4/U6/U5 tri-snRNP. Plays a role in regulating sex-lethal splicing. This chain is U1 small nuclear ribonucleoprotein A (snf), found in Drosophila melanogaster (Fruit fly).